A 100-amino-acid polypeptide reads, in one-letter code: MATIADPRDIILAPVISEKSYSLIEDNVYTFIVHPDSNKTQIKIAIEQIFSVKVSSVNTANRQGKRKRTRTGFGQRKSTKRAIVTLAPGSKPIDLFGAPA.

It belongs to the universal ribosomal protein uL23 family. As to quaternary structure, part of the 50S ribosomal subunit. Contacts protein L29, and trigger factor when it is bound to the ribosome.

In terms of biological role, one of the early assembly proteins it binds 23S rRNA. One of the proteins that surrounds the polypeptide exit tunnel on the outside of the ribosome. Forms the main docking site for trigger factor binding to the ribosome. The chain is Large ribosomal subunit protein uL23 from Mycobacteroides abscessus (strain ATCC 19977 / DSM 44196 / CCUG 20993 / CIP 104536 / JCM 13569 / NCTC 13031 / TMC 1543 / L948) (Mycobacterium abscessus).